Consider the following 292-residue polypeptide: Ribosomal RNA small subunit methyltransferase H (292 aa).

S-adenosyl-L-methionine is bound by residues 32 to 34 (GGH), aspartate 51, leucine 87, aspartate 101, and glutamine 108.

Belongs to the methyltransferase superfamily. RsmH family.

It is found in the cytoplasm. It carries out the reaction cytidine(1402) in 16S rRNA + S-adenosyl-L-methionine = N(4)-methylcytidine(1402) in 16S rRNA + S-adenosyl-L-homocysteine + H(+). Its function is as follows. Specifically methylates the N4 position of cytidine in position 1402 (C1402) of 16S rRNA. This Pseudothermotoga lettingae (strain ATCC BAA-301 / DSM 14385 / NBRC 107922 / TMO) (Thermotoga lettingae) protein is Ribosomal RNA small subunit methyltransferase H.